Here is a 413-residue protein sequence, read N- to C-terminus: BEN domain-containing protein 7 (413 aa).

Residues Lys16, Lys56, and Lys85 each participate in a glycyl lysine isopeptide (Lys-Gly) (interchain with G-Cter in SUMO2) cross-link. Residues 78–88 show a composition bias toward basic and acidic residues; it reads GKEGEKLKEEP. Disordered regions lie at residues 78 to 153 and 208 to 243; these read GKEG…GELP and RTAVSRKRNKKKKVPPKTVEPLTVKQKPSGSEMEKK. Composition is skewed to polar residues over residues 99 to 111 and 121 to 153; these read LNSSAEAPQSLHP and PPQSGQFSGQYGTRSRTFQSQPHPTTSSNGELP. The segment covering 211 to 222 has biased composition (basic residues); the sequence is VSRKRNKKKKVP. The segment covering 223–232 has biased composition (low complexity); it reads PKTVEPLTVK. Lys243 is covalently cross-linked (Glycyl lysine isopeptide (Lys-Gly) (interchain with G-Cter in SUMO2)). Residues 287 to 392 enclose the BEN domain; sequence GFDVFMPKSQ…IKLARRRLKR (106 aa). Residue Thr324 is modified to Phosphothreonine. Ser328 is modified (phosphoserine).

The protein is BEN domain-containing protein 7 (BEND7) of Homo sapiens (Human).